The following is a 146-amino-acid chain: Hemoglobin subunit beta-2 (146 aa).

The Globin domain maps to 2–146; that stretch reads EWTDFERATI…VVSSLGRQYH (145 aa). His-63 and His-92 together coordinate heme b.

It belongs to the globin family. In terms of assembly, hb 2 is a heterotetramer of two alpha-2 and two beta-2 chains. As to expression, red blood cells.

Its function is as follows. Involved in oxygen transport from gills to the various peripheral tissues. In Gobionotothen gibberifrons (Humped rockcod), this protein is Hemoglobin subunit beta-2 (hbb2).